The primary structure comprises 258 residues: Spindlin-2A (258 aa).

The segment covering 1–23 (MKTPNAQEAEGQQTRAAAGRATG) has biased composition (low complexity). The disordered stretch occupies residues 1 to 49 (MKTPNAQEAEGQQTRAAAGRATGSANMTKKKVSQKKQRGRPSSQPRRNI). Residues 28 to 39 (TKKKVSQKKQRG) are compositionally biased toward basic residues. 3 tudor-like domain regions span residues 50-99 (VGCR…LELH), 129-178 (IGKA…YQLL), and 210-255 (IGKH…YDLV). Histone H3K4me3 and H3R8me2a binding stretches follow at residues Glu138 and 246-248 (DFH).

This sequence belongs to the SPIN/STSY family. As to quaternary structure, interacts with C11orf84/SPINDOC.

It localises to the nucleus. In terms of biological role, may be involved in the regulation of cell cycle progression. Exhibits H3K4me3-binding activity. This Homo sapiens (Human) protein is Spindlin-2A (SPIN2A).